The sequence spans 491 residues: UDP-N-acetylmuramate--L-alanine ligase (491 aa).

Residue 126-132 (GTHGKTT) coordinates ATP.

This sequence belongs to the MurCDEF family.

The protein resides in the cytoplasm. The catalysed reaction is UDP-N-acetyl-alpha-D-muramate + L-alanine + ATP = UDP-N-acetyl-alpha-D-muramoyl-L-alanine + ADP + phosphate + H(+). It participates in cell wall biogenesis; peptidoglycan biosynthesis. Its function is as follows. Cell wall formation. This Enterobacter sp. (strain 638) protein is UDP-N-acetylmuramate--L-alanine ligase.